The following is a 210-amino-acid chain: MPPKGLSLAEKRRRLEAIFHDSKDFFQLKEVEKLGSKKQIVLQTVKDVLQSLVDDNIVKTEKIGTSNYYWSFPSDAKRSRESVLGSLQAQLDDLKQKSKTLDENISFEKSKRDNEGTENDANQYTLELLHAKESELKLLKTQLSNLNHCNPETFELKNENTKKYMEAANLWTDQIHTLIAFCRDMGADTNQIREYCSIPEDLDDLQLPIL.

Residues 77–148 (KRSRESVLGS…LKTQLSNLNH (72 aa)) are a coiled coil.

Belongs to the MND1 family. Interacts with meu13.

It localises to the cytoplasm. Its subcellular location is the nucleus. Its function is as follows. Required for meiotic recombination. The sequence is that of Meiotic coiled-coil protein 7 (mcp7) from Schizosaccharomyces pombe (strain 972 / ATCC 24843) (Fission yeast).